A 474-amino-acid chain; its full sequence is Isoflavone 7-O-glucosyltransferase 1 (474 aa).

Residues 1 to 49 (MKDTIVLYPNLGRGHLVSMVELGKLILTHHPSLSITILILTPPTTPSTT) constitute a propeptide, removed in mature form. H15 serves as the catalytic Proton acceptor. H15 lines the an anthocyanidin pocket. The Charge relay role is filled by D125. UDP-alpha-D-glucose is bound by residues T150, A351, Q353, H368, W371, N372, S373, and E376. Residue A391 participates in an anthocyanidin binding. UDP-alpha-D-glucose contacts are provided by E392 and Q393.

The protein belongs to the UDP-glycosyltransferase family. As to quaternary structure, monomer. As to expression, expressed in shoots, leaves, cotyledons, epicotyls, hypocotyls, roots, pods, seeds and flowers.

The enzyme catalyses a 7-hydroxyisoflavone + UDP-alpha-D-glucose = a 7-hydroxyisoflavone 7-O-beta-D-glucoside + UDP + H(+). Involved in the biosynthesis of isoflavonoids. Specific for UDP-glucose. Can use genistein &gt; daidzein &gt; formononetin &gt; quercetin &gt; kaempferol &gt; 4,2',4',6'-tetrahydroxychalcone &gt; apigenin &gt; aureusidin &gt; esculetin &gt; naringenin as substrates, but not cyanidin, trans-p-coumaric acid, caffeic acid, benzoic acid, m- and p-hydroxybenzoic acids, salicylic acid, salicyl alcohol, and hydroquinone. The polypeptide is Isoflavone 7-O-glucosyltransferase 1 (GmIF7GT1) (Glycine max (Soybean)).